The primary structure comprises 564 residues: Laccase-22 (564 aa).

Positions 1-25 (MAVLPESRRLSLLLMAACFLLQALS) are cleaved as a signal peptide. 2 consecutive Plastocyanin-like domains span residues 36 to 152 (NVVM…PKLG) and 162 to 314 (KEAV…YANT). N-linked (GlcNAc...) asparagine glycosylation is found at asparagine 41 and asparagine 82. Histidine 86 and histidine 88 together coordinate Cu cation. An N-linked (GlcNAc...) asparagine glycan is attached at asparagine 118. Cu cation contacts are provided by histidine 131 and histidine 133. Asparagine 191, asparagine 302, asparagine 331, asparagine 379, asparagine 389, asparagine 424, asparagine 437, and asparagine 447 each carry an N-linked (GlcNAc...) asparagine glycan. The 135-residue stretch at 414–548 (DFPATPLHKF…KMAFVVDNGK (135 aa)) folds into the Plastocyanin-like 3 domain. The Cu cation site is built by histidine 465, histidine 468, histidine 470, histidine 527, cysteine 528, histidine 529, and histidine 533.

Belongs to the multicopper oxidase family. It depends on Cu cation as a cofactor.

It is found in the secreted. The protein localises to the extracellular space. The protein resides in the apoplast. It carries out the reaction 4 hydroquinone + O2 = 4 benzosemiquinone + 2 H2O. Functionally, lignin degradation and detoxification of lignin-derived products. The protein is Laccase-22 (LAC22) of Oryza sativa subsp. japonica (Rice).